The primary structure comprises 313 residues: Solute carrier family 35 member E3 (313 aa).

10 helical membrane passes run 14-34, 40-60, 77-97, 100-122, 130-146, 153-173, 187-207, 215-235, 252-272, and 275-295; these read IIAGLLVNLLSSICIVFINKW, GFPNMTLTLIHFVMTWLGLFI, ILLLALSFCGFVVFTNLSLQS, IGTYQLAKVMTTPVIIAIQTMYY, IKLTLVPITLGVILNSY, LMGMIFATLGVLVTSLYQVWV, LLYYQAPMSSAFLLVLVPFFE, IFGPWSFLALFMVLLSGVIAF, TYNMFGHFKFCITLLGGYVLF, and PLSLNQGLGILCTLTGILAYT.

The protein belongs to the TPT transporter family. SLC35E subfamily.

The protein resides in the membrane. Its function is as follows. Putative transporter. This Danio rerio (Zebrafish) protein is Solute carrier family 35 member E3 (slc35e3).